The sequence spans 99 residues: A-type ATP synthase subunit F (99 aa).

The protein belongs to the V-ATPase F subunit family. As to quaternary structure, has multiple subunits with at least A(3), B(3), C, D, E, F, H, I and proteolipid K(x).

The protein resides in the cell membrane. Component of the A-type ATP synthase that produces ATP from ADP in the presence of a proton gradient across the membrane. This is A-type ATP synthase subunit F from Methanothrix thermoacetophila (strain DSM 6194 / JCM 14653 / NBRC 101360 / PT) (Methanosaeta thermophila).